Consider the following 85-residue polypeptide: Small ribosomal subunit protein uS17 (85 aa).

Belongs to the universal ribosomal protein uS17 family. As to quaternary structure, part of the 30S ribosomal subunit.

Functionally, one of the primary rRNA binding proteins, it binds specifically to the 5'-end of 16S ribosomal RNA. This is Small ribosomal subunit protein uS17 from Geobacter sp. (strain M21).